The chain runs to 315 residues: DNA-directed RNA polymerase subunit alpha (315 aa).

The tract at residues 1-228 is alpha N-terminal domain (alpha-NTD); that stretch reads MLEIEKPIIE…EHFKLFMSLT (228 aa). The alpha C-terminal domain (alpha-CTD) stretch occupies residues 245–315; the sequence is KEKVLEMTVE…LGLCLKLNDE (71 aa).

This sequence belongs to the RNA polymerase alpha chain family. As to quaternary structure, homodimer. The RNAP catalytic core consists of 2 alpha, 1 beta, 1 beta' and 1 omega subunit. When a sigma factor is associated with the core the holoenzyme is formed, which can initiate transcription.

It catalyses the reaction RNA(n) + a ribonucleoside 5'-triphosphate = RNA(n+1) + diphosphate. In terms of biological role, DNA-dependent RNA polymerase catalyzes the transcription of DNA into RNA using the four ribonucleoside triphosphates as substrates. This chain is DNA-directed RNA polymerase subunit alpha, found in Clostridium botulinum (strain Alaska E43 / Type E3).